Here is a 295-residue protein sequence, read N- to C-terminus: GTPase Era (295 aa).

The 170-residue stretch at 7 to 176 (KTVSVCIIGR…ITSKAKIAPW (170 aa)) folds into the Era-type G domain. Residues 15-22 (GRPNSGKS) form a G1 region. 15–22 (GRPNSGKS) contacts GTP. Residues 41–45 (QTTRS) form a G2 region. Residues 62–65 (DTPG) form a G3 region. GTP contacts are provided by residues 62 to 66 (DTPGI) and 124 to 127 (NKIE). Residues 124–127 (NKIE) are G4. Residues 152–154 (ISA) form a G5 region. Residues 204-281 (LQQELPYKLT…HLFLFVKVRE (78 aa)) form the KH type-2 domain.

This sequence belongs to the TRAFAC class TrmE-Era-EngA-EngB-Septin-like GTPase superfamily. Era GTPase family. Monomer.

The protein localises to the cytoplasm. The protein resides in the cell inner membrane. An essential GTPase that binds both GDP and GTP, with rapid nucleotide exchange. Plays a role in 16S rRNA processing and 30S ribosomal subunit biogenesis and possibly also in cell cycle regulation and energy metabolism. The polypeptide is GTPase Era (Rickettsia canadensis (strain McKiel)).